A 500-amino-acid polypeptide reads, in one-letter code: Cytochrome P450 monooxygenase ausR (500 aa).

A helical membrane pass occupies residues 15-35 (GVGLYILWTVAVLFVIFKLLA). Cys-439 serves as a coordination point for heme.

Belongs to the cytochrome P450 family. Heme is required as a cofactor.

The protein resides in the membrane. The protein operates within secondary metabolite biosynthesis; terpenoid biosynthesis. In terms of biological role, cytochrome P450 monooxygenase; part of the gene cluster that mediates the biosynthesis of calidodehydroaustin, a fungal meroterpenoid. The first step of the pathway is the synthesis of 3,5-dimethylorsellinic acid by the polyketide synthase ausA. 3,5-dimethylorsellinic acid is then prenylated by the polyprenyl transferase ausN. Further epoxidation by the FAD-dependent monooxygenase ausM and cyclization by the probable terpene cyclase ausL lead to the formation of protoaustinoid A. Protoaustinoid A is then oxidized to spiro-lactone preaustinoid A3 by the combined action of the FAD-binding monooxygenases ausB and ausC, and the dioxygenase ausE. Acid-catalyzed keto-rearrangement and ring contraction of the tetraketide portion of preaustinoid A3 by ausJ lead to the formation of preaustinoid A4. The aldo-keto reductase ausK, with the help of ausH, is involved in the next step by transforming preaustinoid A4 into isoaustinone which is in turn hydroxylated by the P450 monooxygenase ausI to form austinolide. The cytochrome P450 monooxygenase ausG modifies austinolide to austinol. Austinol is further acetylated to austin by the O-acetyltransferase ausP, which spontaneously changes to dehydroaustin. The cytochrome P450 monooxygenase ausR then converts dehydroaustin is into 7-dehydrodehydroaustin. The hydroxylation catalyzed by ausR permits the O-acetyltransferase ausQ to add an additional acetyl group to the molecule, leading to the formation of acetoxydehydroaustin. The short chain dehydrogenase ausT catalyzes the reduction of the double bond present between carbon atoms 1 and 2 to convert 7-dehydrodehydroaustin into 1,2-dihydro-7-hydroxydehydroaustin. AusQ catalyzes not only an acetylation reaction but also the addition of the PKS ausV diketide product to 1,2-dihydro-7-hydroxydehydroaustin, forming precalidodehydroaustin. Finally, the iron/alpha-ketoglutarate-dependent dioxygenase converts precalidodehydroaustin into calidodehydroaustin. The protein is Cytochrome P450 monooxygenase ausR of Aspergillus calidoustus.